The following is a 485-amino-acid chain: Expansin-like protein 8 (485 aa).

Positions 1 to 21 (MRISIILLSLLFLSLHSLIKA) are cleaved as a signal peptide. The Extracellular segment spans residues 22 to 464 (DITKLSVCGS…QSGHHASSNT (443 aa)). The Expansin-like EG45 domain maps to 26–139 (LSVCGSARAV…QIVSCGYSGN (114 aa)). Disulfide bonds link Cys-29/Cys-70 and Cys-73/Cys-134. N-linked (GlcNAc...) asparagine glycosylation is found at Asn-117 and Asn-365. The disordered stretch occupies residues 408–436 (EVNNKPSTTSGTGTTSSKPSSSSGGVSGG). Over residues 414-431 (STTSGTGTTSSKPSSSSG) the composition is skewed to low complexity. Asn-454 carries N-linked (GlcNAc...) asparagine glycosylation. Residues 465–485 (NILLPTTFVFFISITILSLLF) traverse the membrane as a helical segment.

The protein belongs to the expansin family. Expansin A subfamily.

The protein resides in the membrane. Its function is as follows. May serve to lubricate the movement of the cellulose microfibrils during cell growth and wall extension and/or may serve to maintain the fluid state of the slug cell wall. The protein is Expansin-like protein 8 (expl8) of Dictyostelium discoideum (Social amoeba).